Reading from the N-terminus, the 205-residue chain is GTP cyclohydrolase-2 (205 aa).

GTP is bound at residue 49 to 53; it reads RIHSE. Zn(2+) contacts are provided by Cys-54, Cys-65, and Cys-67. GTP-binding positions include Gln-70, 92 to 94, and Thr-114; that span reads EGR. The Proton acceptor role is filled by Asp-126. The active-site Nucleophile is the Arg-128. Residues Thr-149 and Lys-154 each contribute to the GTP site.

The protein belongs to the GTP cyclohydrolase II family. It depends on Zn(2+) as a cofactor.

It carries out the reaction GTP + 4 H2O = 2,5-diamino-6-hydroxy-4-(5-phosphoribosylamino)-pyrimidine + formate + 2 phosphate + 3 H(+). It participates in cofactor biosynthesis; riboflavin biosynthesis; 5-amino-6-(D-ribitylamino)uracil from GTP: step 1/4. Its function is as follows. Catalyzes the conversion of GTP to 2,5-diamino-6-ribosylamino-4(3H)-pyrimidinone 5'-phosphate (DARP), formate and pyrophosphate. This chain is GTP cyclohydrolase-2, found in Shewanella denitrificans (strain OS217 / ATCC BAA-1090 / DSM 15013).